A 1426-amino-acid polypeptide reads, in one-letter code: Homeobox protein cut-like 2 (1426 aa).

Positions 77–104 are disordered; sequence PEPPSAREQNEGTCPTGHTPANGNHLPG. Serine 81 bears the Phosphoserine mark. The stretch at 131-311 forms a coiled coil; that stretch reads ITLAARLGEA…IKTELSILRA (181 aa). 6 disordered regions span residues 351-419, 460-488, 599-628, 653-676, 743-769, and 904-977; these read ALLA…FPSL, KPPS…GPEE, EIES…STSE, ESGP…TASQ, YASV…PRGD, and LGQG…SSSQ. Residues 374–395 show a composition bias toward pro residues; it reads PPYPPQLPPPPGPEDPLSPSPA. 2 stretches are compositionally biased toward low complexity: residues 397–408 and 460–470; these read PLLGPSLGPDGP and KPPSAPAASVP. A DNA-binding region (CUT 1) is located at residues 482–569; the sequence is DGAGPEEEQL…VLALRTIQVR (88 aa). Residues 587-655 adopt a coiled-coil conformation; the sequence is DAIKSILEQA…QQALLEMESG (69 aa). Positions 608–628 are enriched in polar residues; it reads SKNSPASVSIPNGTASSSTSE. Low complexity-rich tracts occupy residues 743 to 757, 910 to 928, and 965 to 976; these read YASV…SSYS, QAPT…EPTS, and SSSLGGKPFSSS. Residues 828–915 constitute a DNA-binding region (CUT 2); it reads QYELYMYREV…QGQGQAPTQQ (88 aa). The CUT 3 DNA-binding region spans 983–1070; it reads QEMVAMSPEL…VEKLRDMKKL (88 aa). Positions 1113–1172 form a DNA-binding region, homeobox; sequence AKKPRVVLAPAEKEALRKAYQLEPYPSQQTIELLSFQLNLKTNTVINWFHNYRSRMRREM. The interval 1177-1392 is disordered; sequence TQDDPDFDPS…AALHPSTKVN (216 aa). 2 stretches are compositionally biased toward basic and acidic residues: residues 1233-1245 and 1260-1274; these read APDR…KQEE and DPDR…EHTH. Residues 1318–1332 are compositionally biased toward low complexity; sequence LSFKSTSESSCCSLE. The segment covering 1338–1350 has biased composition (polar residues); it reads PSVISSPDLTTCV. Over residues 1351–1364 the composition is skewed to low complexity; the sequence is SPAPSSSAPISPSL.

The protein belongs to the CUT homeobox family. As to expression, restricted to neural tissues. Expressed exclusively in the central and peripheral nervous systems.

Its subcellular location is the nucleus. Functionally, transcription factor involved in the control of neuronal proliferation and differentiation in the brain. Regulates dendrite development and branching, dendritic spine formation, and synaptogenesis in cortical layers II-III. Binds to DNA in a sequence-specific manner. This Mus musculus (Mouse) protein is Homeobox protein cut-like 2 (Cux2).